Reading from the N-terminus, the 869-residue chain is Probable beta-glucosidase F (869 aa).

Residues 1–19 form the signal peptide; the sequence is MRVLSAIALVASLASSALS. 2 N-linked (GlcNAc...) asparagine glycosylation sites follow: asparagine 77 and asparagine 261. Residue aspartate 289 is part of the active site. Residues asparagine 332, asparagine 364, asparagine 399, and asparagine 478 are each glycosylated (N-linked (GlcNAc...) asparagine). The disordered stretch occupies residues 677 to 697; it reads STYPPTRPPKGPTPTYPTAIP. Pro residues predominate over residues 681 to 691; that stretch reads PTRPPKGPTPT. N-linked (GlcNAc...) asparagine glycosylation occurs at asparagine 728.

The protein belongs to the glycosyl hydrolase 3 family.

Its subcellular location is the secreted. It carries out the reaction Hydrolysis of terminal, non-reducing beta-D-glucosyl residues with release of beta-D-glucose.. It functions in the pathway glycan metabolism; cellulose degradation. Its function is as follows. Beta-glucosidases are one of a number of cellulolytic enzymes involved in the degradation of cellulosic biomass. Catalyzes the last step releasing glucose from the inhibitory cellobiose. The polypeptide is Probable beta-glucosidase F (bglF) (Aspergillus fumigatus (strain CBS 144.89 / FGSC A1163 / CEA10) (Neosartorya fumigata)).